Consider the following 380-residue polypeptide: Crotonobetainyl-CoA reductase (380 aa).

Belongs to the acyl-CoA dehydrogenase family. As to quaternary structure, homotetramer. It depends on FAD as a cofactor.

The protein localises to the cytoplasm. It catalyses the reaction 4-(trimethylamino)butanoyl-CoA + oxidized [electron-transfer flavoprotein] + H(+) = crotonobetainyl-CoA + reduced [electron-transfer flavoprotein]. It functions in the pathway amine and polyamine metabolism; carnitine metabolism. Catalyzes the reduction of crotonobetainyl-CoA to gamma-butyrobetainyl-CoA. This Escherichia coli (strain UTI89 / UPEC) protein is Crotonobetainyl-CoA reductase.